A 372-amino-acid chain; its full sequence is SAM domain-containing protein SAMSN-1 (372 aa).

Residues 1-71 (MLKRKPSNAS…SGGSLGKKVR (71 aa)) are disordered. The short motif at 20–25 (RSSSFG) is the Important for interaction with 14-3-3 proteins element. Phosphoserine occurs at positions 23 and 34. A compositionally biased stretch (basic and acidic residues) spans 37 to 49 (KSDDSIEVHDREL). Over residues 52-63 (GSEEQSKTSSSG) the composition is skewed to low complexity. Position 74 is a phosphoserine (S74). A Phosphothreonine modification is found at T76. Residues S90, S97, and S119 each carry the phosphoserine modification. The interval 90-111 (SEEKEEESGEEALPYRNSDPMI) is disordered. Low complexity predominate over residues 129-146 (LYSGQSSSSGITSCSDGT). Residues 129–153 (LYSGQSSSSGITSCSDGTSNRDSFR) form a disordered region. Residue Y160 is modified to Phosphotyrosine. Residues 163–224 (PFCGRAKVHT…KFIYVDVILE (62 aa)) form the SH3 domain. The SAM domain maps to 241 to 305 (ENHQTIQEFL…LSAAESLLDE (65 aa)). A disordered region spans residues 304–372 (DEETTVEHEK…QKIAITESSD (69 aa)). Positions 317–329 (PLSSNPDILSASQ) are enriched in polar residues.

Interacts with FASLG. Interacts with phosphotyrosine containing proteins. Interacts (via SH3 domain) with CTTN. Interacts (phosphorylated at Ser-23) with YWHAB, YWHAE, YWHAG, YWHAH, YWHAZ and SFN. Interacts directly with SAP30 and HDAC1. Identified in a complex with SAP30 and HDAC1. As to expression, detected in spleen and lymph node (at protein level).

The protein localises to the nucleus. It localises to the cytoplasm. It is found in the cell projection. The protein resides in the ruffle. Negative regulator of B-cell activation. Down-regulates cell proliferation (in vitro). Promotes RAC1-dependent membrane ruffle formation and reorganization of the actin cytoskeleton. Regulates cell spreading and cell polarization. Stimulates HDAC1 activity. Regulates LYN activity by modulating its tyrosine phosphorylation. This Mus musculus (Mouse) protein is SAM domain-containing protein SAMSN-1 (Samsn1).